Reading from the N-terminus, the 385-residue chain is Calcium/calmodulin-dependent protein kinase type 1D (385 aa).

Residues 23–279 (FEFKETLGTG…CEQAARHPWI (257 aa)) enclose the Protein kinase domain. Residues 29–37 (LGTGAFSEV) and Lys-52 each bind ATP. Residue Lys-113 forms a Glycyl lysine isopeptide (Lys-Gly) (interchain with G-Cter in SUMO2) linkage. Ser-122 carries the phosphoserine modification. Asp-144 functions as the Proton acceptor in the catalytic mechanism. Thr-180 bears the Phosphothreonine; by CaMKK1 and CaMKK2 mark. Positions 279–319 (IAGDTALSKNIHESVSAQIRKNFAKSKWRQAFNATAVVRHM) are autoinhibitory domain. The tract at residues 299 to 320 (KNFAKSKWRQAFNATAVVRHMR) is calmodulin-binding. The Nuclear export signal motif lies at 318–324 (HMRRLQL). The segment at 363–385 (VAGVGAERRPRPTTVTTGHTGSK) is disordered. The span at 375 to 385 (TTVTTGHTGSK) shows a compositional bias: polar residues.

The protein belongs to the protein kinase superfamily. CAMK Ser/Thr protein kinase family. CaMK subfamily. Expressed ubiquitously with high levels in brain and low levels in kidney. Isoform 2 is highly expressed in brain compared to other tissues. In hematopoietic cell lines predominant expression was detected in T and EC cells.

It localises to the cytoplasm. The protein localises to the nucleus. It carries out the reaction L-seryl-[protein] + ATP = O-phospho-L-seryl-[protein] + ADP + H(+). The enzyme catalyses L-threonyl-[protein] + ATP = O-phospho-L-threonyl-[protein] + ADP + H(+). With respect to regulation, activated by Ca(2+)/calmodulin. Binding of calmodulin results in conformational change that relieves intrasteric autoinhibition and allows phosphorylation of Thr-180 within the activation loop by CaMKK1 or CaMKK2. Phosphorylation of Thr-180 results in several fold increase in total activity. Unlike CaMK4, may be unable to exhibit autonomous activity after Ca(2+)/calmodulin activation. Functionally, calcium/calmodulin-dependent protein kinase that operates in the calcium-triggered CaMKK-CaMK1 signaling cascade and, upon calcium influx, activates CREB-dependent gene transcription, regulates calcium-mediated granulocyte function and respiratory burst and promotes basal dendritic growth of hippocampal neurons. In neutrophil cells, required for cytokine-induced proliferative responses and activation of the respiratory burst. Activates the transcription factor CREB1 in hippocampal neuron nuclei. May play a role in apoptosis of erythroleukemia cells. In vitro, phosphorylates transcription factor CREM isoform Beta. Isoform 1 but not isoform 2 activates CREB1. This is Calcium/calmodulin-dependent protein kinase type 1D (Camk1d) from Mus musculus (Mouse).